The primary structure comprises 286 residues: Probable tRNA(His) guanylyltransferase (286 aa).

3 residues coordinate Mg(2+): Asp29, Gly30, and Asp76. Residues Asp29–His34 and Ser75–Asp76 each bind GTP.

The protein belongs to the tRNA(His) guanylyltransferase family. Mg(2+) is required as a cofactor.

The catalysed reaction is a 5'-end ribonucleotide-tRNA(His) + GTP + ATP + H2O = a 5'-end phospho-guanosine-ribonucleotide-tRNA(His) + AMP + 2 diphosphate + H(+). In terms of biological role, adds a GMP to the 5'-end of tRNA(His) after transcription and RNase P cleavage. In Drosophila melanogaster (Fruit fly), this protein is Probable tRNA(His) guanylyltransferase.